Reading from the N-terminus, the 301-residue chain is F1 operon positive regulatory protein (301 aa).

Positions Asn8–Ile107 constitute an HTH araC/xylS-type domain. DNA-binding regions (H-T-H motif) lie at residues Asp26–Val47 and Ile74–Phe97.

Functionally, positive regulator of F1 operon expression. The sequence is that of F1 operon positive regulatory protein (caf1R) from Yersinia pestis.